A 110-amino-acid chain; its full sequence is Large ribosomal subunit protein uL22 (110 aa).

Residues 84–95 (ARGTASKIRKPT) are compositionally biased toward basic residues. Residues 84-110 (ARGTASKIRKPTSHVMVEVSKPEKKEA) are disordered.

The protein belongs to the universal ribosomal protein uL22 family. In terms of assembly, part of the 50S ribosomal subunit.

In terms of biological role, this protein binds specifically to 23S rRNA; its binding is stimulated by other ribosomal proteins, e.g. L4, L17, and L20. It is important during the early stages of 50S assembly. It makes multiple contacts with different domains of the 23S rRNA in the assembled 50S subunit and ribosome. Functionally, the globular domain of the protein is located near the polypeptide exit tunnel on the outside of the subunit, while an extended beta-hairpin is found that lines the wall of the exit tunnel in the center of the 70S ribosome. In Campylobacter concisus (strain 13826), this protein is Large ribosomal subunit protein uL22.